The chain runs to 647 residues: DNA mismatch repair protein MutL (647 aa).

Belongs to the DNA mismatch repair MutL/HexB family.

This protein is involved in the repair of mismatches in DNA. It is required for dam-dependent methyl-directed DNA mismatch repair. May act as a 'molecular matchmaker', a protein that promotes the formation of a stable complex between two or more DNA-binding proteins in an ATP-dependent manner without itself being part of a final effector complex. This chain is DNA mismatch repair protein MutL, found in Bacillus cereus (strain 03BB102).